Here is a 344-residue protein sequence, read N- to C-terminus: MLVLGIESSCDETGLALYDTGAGLLAHALHSQIAMHRDYGGVVPELASRDHIRRVLPLLEQVLADAGRTRQDIDAIAFTQGPGLAGALLVGASVANALGFALNVPMVGVHHLEGHLLSPLLTREPPPFPFVALLVSGGHTQLMEVRGIGDYTLLGETLDDAAGEAFDKTAKLLGLGYPGGPEVSRLAEFGIPGAFALPRPMLHSGNLDFSFAGLKTAVLTQTRKLANTCEQDRANLARAFVDAIVDVLAAKSMAALKQTGHKRLVVAGGVGANRQLRERLDQMGKQRKIDVYYPDLAFCTDNGAMIAFAGAMRLQAAPELARHEYGYGVTPRWDLADIRLPSAA.

Fe cation contacts are provided by His-111 and His-115. Substrate is bound by residues 134–138 (LVSGG), Asp-167, Gly-180, and Asn-273. Asp-301 serves as a coordination point for Fe cation.

It belongs to the KAE1 / TsaD family. Fe(2+) is required as a cofactor.

It is found in the cytoplasm. It catalyses the reaction L-threonylcarbamoyladenylate + adenosine(37) in tRNA = N(6)-L-threonylcarbamoyladenosine(37) in tRNA + AMP + H(+). In terms of biological role, required for the formation of a threonylcarbamoyl group on adenosine at position 37 (t(6)A37) in tRNAs that read codons beginning with adenine. Is involved in the transfer of the threonylcarbamoyl moiety of threonylcarbamoyl-AMP (TC-AMP) to the N6 group of A37, together with TsaE and TsaB. TsaD likely plays a direct catalytic role in this reaction. This chain is tRNA N6-adenosine threonylcarbamoyltransferase, found in Cupriavidus necator (strain ATCC 17699 / DSM 428 / KCTC 22496 / NCIMB 10442 / H16 / Stanier 337) (Ralstonia eutropha).